The sequence spans 458 residues: V-type sodium ATPase subunit B (458 aa).

This sequence belongs to the ATPase alpha/beta chains family.

Functionally, involved in ATP-driven sodium extrusion. The sequence is that of V-type sodium ATPase subunit B (ntpB) from Enterococcus hirae (strain ATCC 9790 / DSM 20160 / JCM 8729 / LMG 6399 / NBRC 3181 / NCIMB 6459 / NCDO 1258 / NCTC 12367 / WDCM 00089 / R).